The sequence spans 476 residues: Protein DETOXIFICATION 17 (476 aa).

12 helical membrane passes run 29 to 51, 70 to 90, 111 to 131, 140 to 160, 177 to 197, 205 to 225, 252 to 272, 286 to 306, 326 to 346, 363 to 383, 405 to 425, and 431 to 451; these read LWLS…ISVM, FASV…ETLC, FVLL…EQIL, IASV…AYGL, VFVC…LFVL, GAAL…SCYV, IAFP…LLVL, VLSI…GLGG, LAVY…VTVL, IIAY…LDGL, LGSY…HFHI, and WLGI…VTIF.

Belongs to the multi antimicrobial extrusion (MATE) (TC 2.A.66.1) family.

Its subcellular location is the membrane. The sequence is that of Protein DETOXIFICATION 17 from Arabidopsis thaliana (Mouse-ear cress).